Reading from the N-terminus, the 240-residue chain is Phosphoribosylaminoimidazole-succinocarboxamide synthase (240 aa).

It belongs to the SAICAR synthetase family.

The catalysed reaction is 5-amino-1-(5-phospho-D-ribosyl)imidazole-4-carboxylate + L-aspartate + ATP = (2S)-2-[5-amino-1-(5-phospho-beta-D-ribosyl)imidazole-4-carboxamido]succinate + ADP + phosphate + 2 H(+). The protein operates within purine metabolism; IMP biosynthesis via de novo pathway; 5-amino-1-(5-phospho-D-ribosyl)imidazole-4-carboxamide from 5-amino-1-(5-phospho-D-ribosyl)imidazole-4-carboxylate: step 1/2. The chain is Phosphoribosylaminoimidazole-succinocarboxamide synthase from Pyrobaculum calidifontis (strain DSM 21063 / JCM 11548 / VA1).